The sequence spans 611 residues: Glutamine--fructose-6-phosphate aminotransferase [isomerizing] (611 aa).

Cysteine 2 acts as the Nucleophile; for GATase activity in catalysis. One can recognise a Glutamine amidotransferase type-2 domain in the interval 2–219 (CGIVGGVSKT…DGDVAMLQRQ (218 aa)). SIS domains lie at 287-427 (AAAM…APGA) and 460-601 (WAAR…VDRP). Lysine 606 serves as the catalytic For Fru-6P isomerization activity.

In terms of assembly, homodimer.

Its subcellular location is the cytoplasm. The enzyme catalyses D-fructose 6-phosphate + L-glutamine = D-glucosamine 6-phosphate + L-glutamate. In terms of biological role, catalyzes the first step in hexosamine metabolism, converting fructose-6P into glucosamine-6P using glutamine as a nitrogen source. In Acidithiobacillus ferridurans, this protein is Glutamine--fructose-6-phosphate aminotransferase [isomerizing].